We begin with the raw amino-acid sequence, 212 residues long: ATP phosphoribosyltransferase (212 aa).

Belongs to the ATP phosphoribosyltransferase family. Short subfamily. In terms of assembly, heteromultimer composed of HisG and HisZ subunits.

Its subcellular location is the cytoplasm. It carries out the reaction 1-(5-phospho-beta-D-ribosyl)-ATP + diphosphate = 5-phospho-alpha-D-ribose 1-diphosphate + ATP. It functions in the pathway amino-acid biosynthesis; L-histidine biosynthesis; L-histidine from 5-phospho-alpha-D-ribose 1-diphosphate: step 1/9. Functionally, catalyzes the condensation of ATP and 5-phosphoribose 1-diphosphate to form N'-(5'-phosphoribosyl)-ATP (PR-ATP). Has a crucial role in the pathway because the rate of histidine biosynthesis seems to be controlled primarily by regulation of HisG enzymatic activity. This is ATP phosphoribosyltransferase from Prochlorococcus marinus (strain MIT 9515).